Reading from the N-terminus, the 221-residue chain is Adenylate kinase (221 aa).

ATP is bound at residue 10-15; sequence GAGKGT. The interval 30–59 is NMP; the sequence is STGDIFRQNLRDNTELGKLAKEYMDKGLLV. AMP is bound by residues Thr31, Arg36, 57–59, 85–88, and Gln92; these read LLV and GYPR. Residues 126–163 form an LID region; that stretch reads GRRVCPVCGATYHIKTSPPKVDNVCDKCGSELIQRSDD. Arg127 is an ATP binding site. Zn(2+)-binding residues include Cys130 and Cys133. 136 to 137 serves as a coordination point for ATP; the sequence is TY. 2 residues coordinate Zn(2+): Cys150 and Cys153. AMP is bound by residues Arg160 and Arg171. ATP is bound at residue Lys199.

Belongs to the adenylate kinase family. In terms of assembly, monomer.

It is found in the cytoplasm. It carries out the reaction AMP + ATP = 2 ADP. The protein operates within purine metabolism; AMP biosynthesis via salvage pathway; AMP from ADP: step 1/1. Its function is as follows. Catalyzes the reversible transfer of the terminal phosphate group between ATP and AMP. Plays an important role in cellular energy homeostasis and in adenine nucleotide metabolism. This is Adenylate kinase from Caldanaerobacter subterraneus subsp. tengcongensis (strain DSM 15242 / JCM 11007 / NBRC 100824 / MB4) (Thermoanaerobacter tengcongensis).